The following is a 347-amino-acid chain: 5-deoxyribose 1-phosphate isomerase (347 aa).

Residues 48-50, R91, and Q198 each bind substrate; that span reads RGA. The Proton donor role is filled by D239. Residue 249–250 participates in substrate binding; that stretch reads NK.

The protein belongs to the EIF-2B alpha/beta/delta subunits family. DrdI subfamily.

The catalysed reaction is 5-deoxy-alpha-D-ribose 1-phosphate = 5-deoxy-D-ribulose 1-phosphate. It participates in carbohydrate degradation. Its function is as follows. Catalyzes the isomerization of 5-deoxy-alpha-D-ribose 1-phosphate to 5-deoxy-D-ribulose 1-phosphate, as part of a 5-deoxyribose salvage pathway that recycles this toxic radical SAM enzyme by-product to mainstream metabolites. In Bacillus thuringiensis subsp. konkukian (strain 97-27), this protein is 5-deoxyribose 1-phosphate isomerase.